The following is a 466-amino-acid chain: Ribosome biogenesis protein YTM1 (466 aa).

A ubiquitin-like (UBL) domain region spans residues 8–95 (IKINFFTNEE…EASLNLEYTR (88 aa)). Positions 105–466 (SFNNDDWISS…QINKGSDITK (362 aa)) are sufficient for interaction with ERB1 and association with 66S pre-ribosomes. 7 WD repeats span residues 120-159 (PLSA…EKQY), 161-199 (GHSG…NIED), 214-253 (GHKA…MTTI), 291-331 (GHSQ…CVDT), 333-372 (TTGY…TTTE), 381-421 (GHTN…SLYT), and 431-466 (KGQD…DITK).

Belongs to the WD repeat WDR12/YTM1 family. As to quaternary structure, component of the NOP7 complex, composed of ERB1, NOP7 and YTM1. The complex is held together by ERB1, which interacts with NOP7 via its N-terminal domain and with YTM1 via a high-affinity interaction between the seven-bladed beta-propeller domains of the 2 proteins. The NOP7 complex associates with the 66S pre-ribosome. Interacts (via UBL domain) with MDN1 (via VWFA/MIDAS domain).

Its subcellular location is the nucleus. The protein resides in the nucleolus. It localises to the nucleoplasm. In terms of biological role, component of the NOP7 complex, which is required for maturation of the 25S and 5.8S ribosomal RNAs and formation of the 60S ribosome. The protein is Ribosome biogenesis protein YTM1 of Debaryomyces hansenii (strain ATCC 36239 / CBS 767 / BCRC 21394 / JCM 1990 / NBRC 0083 / IGC 2968) (Yeast).